The following is a 156-amino-acid chain: Small ribosomal subunit protein uS7 (156 aa).

Belongs to the universal ribosomal protein uS7 family. As to quaternary structure, part of the 30S ribosomal subunit. Contacts proteins S9 and S11.

In terms of biological role, one of the primary rRNA binding proteins, it binds directly to 16S rRNA where it nucleates assembly of the head domain of the 30S subunit. Is located at the subunit interface close to the decoding center, probably blocks exit of the E-site tRNA. The polypeptide is Small ribosomal subunit protein uS7 (Rubrobacter xylanophilus (strain DSM 9941 / JCM 11954 / NBRC 16129 / PRD-1)).